Consider the following 427-residue polypeptide: 3-phosphoshikimate 1-carboxyvinyltransferase (427 aa).

Positions 22, 23, and 27 each coordinate 3-phosphoshikimate. K22 provides a ligand contact to phosphoenolpyruvate. 2 residues coordinate phosphoenolpyruvate: G96 and R124. 3-phosphoshikimate contacts are provided by S169, S170, Q171, S197, D313, N336, and K340. Q171 contributes to the phosphoenolpyruvate binding site. Residue D313 is the Proton acceptor of the active site. Residues R344, R386, and K411 each contribute to the phosphoenolpyruvate site.

The protein belongs to the EPSP synthase family. Monomer.

It is found in the cytoplasm. It catalyses the reaction 3-phosphoshikimate + phosphoenolpyruvate = 5-O-(1-carboxyvinyl)-3-phosphoshikimate + phosphate. Its pathway is metabolic intermediate biosynthesis; chorismate biosynthesis; chorismate from D-erythrose 4-phosphate and phosphoenolpyruvate: step 6/7. Catalyzes the transfer of the enolpyruvyl moiety of phosphoenolpyruvate (PEP) to the 5-hydroxyl of shikimate-3-phosphate (S3P) to produce enolpyruvyl shikimate-3-phosphate and inorganic phosphate. This chain is 3-phosphoshikimate 1-carboxyvinyltransferase, found in Salmonella dublin (strain CT_02021853).